The primary structure comprises 578 residues: Endonuclease GajA (578 aa).

The tract at residues Met1–Lys341 is ATPase domain. Asp32 to Thr36 serves as a coordination point for ATP. The segment at Leu370–Ile510 is toprim domain. Positions 379, 383, 463, 464, and 513 each coordinate a divalent metal cation.

As to quaternary structure, homotetramer. Forms the core of the anti-phage defense complex. Interacts with GajB; 2 GajB dimers dock at opposite sides of the GajA complex to form a 4:4 GajA-GajB assembly (GajAB). GajAB interacts with Bacillus phage Phi3T Gad1 protein; this interaction forms a 4:4:8 GajAB-Gad1 complex and leads to GajAB inhibition. Requires Mg(2+) as cofactor. Mn(2+) serves as cofactor.

Its activity is regulated as follows. Endonuclease activity inhibited by all NTPs, dNTPs, NDPs (at 0.5 mM, UDP not tested) and AMP-PNP; not inhibited by any tested NMP, dNMP or nucleoside. Inhibited by 100 mM NaCl, 100 mM KCl, 0.5 mM Co(2+) and 0.5 mM Ni(2+). Component of antiviral defense system Gabija type I, composed of GajA and GajB. Endonuclease that nicks double-stranded DNA within the sequence 5'-TNNNCGGGNNA-3' in the absence of nucleotides (NTP, dNTP and NDPs), cleaving after C-1. Has no detected ATPase activity. Expression of Gabija type I in B.subtilis (strain BEST7003) confers resistance to phages phi105, phi29, rho14, SpBeta and SBSphiC. Expression of Gabija type I in E.coli B (strain ATCC 11303) confers resistance to phage T7. It is thought that this enzyme is strongly suppressed during physiological growth (in E.coli total nucleotide concentration is over 8.7 mM in mid-log phase), but during viral replication, when nucleotides are rapidly consumed, it is de-suppressed and degrades target DNA. This is Endonuclease GajA from Bacillus cereus (strain VD045).